Consider the following 444-residue polypeptide: Beta-D-glucosyl crocetin beta-1,6-glucosyltransferase (444 aa).

His9 (proton acceptor) is an active-site residue. His9 serves as a coordination point for an anthocyanidin. Asp108 (charge relay) is an active-site residue. The UDP-alpha-D-glucose site is built by Thr130, Ala319, Gln321, His336, Trp339, Asn340, Ser341, Glu344, Asp360, and Gln361.

The protein belongs to the UDP-glycosyltransferase family. Ubiquitous.

The enzyme catalyses beta-D-glucosyl crocetin + UDP-alpha-D-glucose = beta-D-gentiobiosyl crocetin + UDP + H(+). It carries out the reaction bis(beta-D-glucosyl) crocetin + UDP-alpha-D-glucose = beta-D-gentiobiosyl beta-D-glucosyl crocetin + UDP + H(+). The catalysed reaction is beta-D-gentiobiosyl beta-D-glucosyl crocetin + UDP-alpha-D-glucose = bis(beta-D-gentiobiosyl) crocetin + UDP + H(+). Its function is as follows. Glucosyltransferase catalyzing the beta 1-6 glucosylation of the sugar moiety of crocetin glucosyl esters to produce crocetin gentiobiosyl esters. Weak activity toward curcumin glucosides, but no activity with flavonoid glucosides, coumarin glucosides, 4-nitrophenyl glucoside or crocetin. Involved with UGT75L6 in sequential glycosylation of crocetin to crocin (bis(beta-D-gentiobiosyl) crocetin). This Gardenia jasminoides (Cape jasmine) protein is Beta-D-glucosyl crocetin beta-1,6-glucosyltransferase (UGT94E5).